The primary structure comprises 247 residues: Probable transcriptional regulatory protein SynWH7803_1972 (247 aa).

Belongs to the TACO1 family.

It localises to the cytoplasm. This Synechococcus sp. (strain WH7803) protein is Probable transcriptional regulatory protein SynWH7803_1972.